The following is a 426-amino-acid chain: Ubiquitin carboxyl-terminal hydrolase 46 (426 aa).

Gly-2 carries N-myristoyl glycine lipidation. A USP domain is found at 27 to 406 (YGLVNFGNTC…SAYILFYQAR (380 aa)). The active-site Nucleophile is the Cys-36. The segment at 162–181 (TAGLPRSDEKGTSERNGGIT) is disordered. Catalysis depends on His-342, which acts as the Proton acceptor.

Belongs to the peptidase C19 family. In terms of assembly, interacts with wdr-20 and wdr-48; the catalytic activity of usp-46 is increased in the presence of both wdr-20 and wdr-48. Interacts with glr-1; the interaction results in deubiquitination of glr-1. Expressed in a number of tissues including the nervous system, pharynx, body wall muscle, vulva muscle and intestine and is detected in many head and ventral cord neurons.

Its subcellular location is the perikaryon. It is found in the cytoplasm. It carries out the reaction Thiol-dependent hydrolysis of ester, thioester, amide, peptide and isopeptide bonds formed by the C-terminal Gly of ubiquitin (a 76-residue protein attached to proteins as an intracellular targeting signal).. In terms of biological role, regulates the abundance of the glr-1 glutamate receptor in the ventral nerve cord by promoting its deubiquitination and preventing its degradation in the lysosome. Contributes to the regulation of embryonic polarity. The sequence is that of Ubiquitin carboxyl-terminal hydrolase 46 (usp-46) from Caenorhabditis elegans.